The following is a 227-amino-acid chain: MAYPFQLGLQDATSPIMEELTNFHDHTLMIVFLISSLVLYIISLMLTTKLTHTSTMDAQEVETIWTILPAAILILIALPSLRILYMMDEINNPVLTVKTMGHQWYWSYEYTDYEDLCFDSYMIPTNDLKPGELRLLEVDNRVVLPMELPIRMLISSEDVLHSWTVPSLGLKTDAIPGRLNQATLSSNRPGLYYGQCSEICGSNHSFMPIVLEMVPLKYFENWSTSMI.

Topologically, residues 1–14 (MAYPFQLGLQDATS) are mitochondrial intermembrane. A helical membrane pass occupies residues 15-45 (PIMEELTNFHDHTLMIVFLISSLVLYIISLM). Residues 46–59 (LTTKLTHTSTMDAQ) are Mitochondrial matrix-facing. A helical transmembrane segment spans residues 60–87 (EVETIWTILPAAILILIALPSLRILYMM). Topologically, residues 88–227 (DEINNPVLTV…YFENWSTSMI (140 aa)) are mitochondrial intermembrane. Residues H161, C196, E198, C200, H204, and M207 each contribute to the Cu cation site. E198 lines the Mg(2+) pocket. Position 218 is a phosphotyrosine (Y218).

This sequence belongs to the cytochrome c oxidase subunit 2 family. Component of the cytochrome c oxidase (complex IV, CIV), a multisubunit enzyme composed of 14 subunits. The complex is composed of a catalytic core of 3 subunits MT-CO1, MT-CO2 and MT-CO3, encoded in the mitochondrial DNA, and 11 supernumerary subunits COX4I, COX5A, COX5B, COX6A, COX6B, COX6C, COX7A, COX7B, COX7C, COX8 and NDUFA4, which are encoded in the nuclear genome. The complex exists as a monomer or a dimer and forms supercomplexes (SCs) in the inner mitochondrial membrane with NADH-ubiquinone oxidoreductase (complex I, CI) and ubiquinol-cytochrome c oxidoreductase (cytochrome b-c1 complex, complex III, CIII), resulting in different assemblies (supercomplex SCI(1)III(2)IV(1) and megacomplex MCI(2)III(2)IV(2)). Found in a complex with TMEM177, COA6, COX18, COX20, SCO1 and SCO2. Interacts with TMEM177 in a COX20-dependent manner. Interacts with COX20. Interacts with COX16. It depends on Cu cation as a cofactor.

It localises to the mitochondrion inner membrane. It carries out the reaction 4 Fe(II)-[cytochrome c] + O2 + 8 H(+)(in) = 4 Fe(III)-[cytochrome c] + 2 H2O + 4 H(+)(out). In terms of biological role, component of the cytochrome c oxidase, the last enzyme in the mitochondrial electron transport chain which drives oxidative phosphorylation. The respiratory chain contains 3 multisubunit complexes succinate dehydrogenase (complex II, CII), ubiquinol-cytochrome c oxidoreductase (cytochrome b-c1 complex, complex III, CIII) and cytochrome c oxidase (complex IV, CIV), that cooperate to transfer electrons derived from NADH and succinate to molecular oxygen, creating an electrochemical gradient over the inner membrane that drives transmembrane transport and the ATP synthase. Cytochrome c oxidase is the component of the respiratory chain that catalyzes the reduction of oxygen to water. Electrons originating from reduced cytochrome c in the intermembrane space (IMS) are transferred via the dinuclear copper A center (CU(A)) of subunit 2 and heme A of subunit 1 to the active site in subunit 1, a binuclear center (BNC) formed by heme A3 and copper B (CU(B)). The BNC reduces molecular oxygen to 2 water molecules using 4 electrons from cytochrome c in the IMS and 4 protons from the mitochondrial matrix. The polypeptide is Cytochrome c oxidase subunit 2 (MT-CO2) (Arvicanthis somalicus (Neumann's grass rat)).